Consider the following 352-residue polypeptide: Guanine nucleotide-binding protein alpha-7 subunit (352 aa).

Residue G2 is the site of N-myristoyl glycine attachment. The S-palmitoyl cysteine moiety is linked to residue C4. Positions 32-352 (RIIKLLLLGA…AKNLKSMGLC (321 aa)) constitute a G-alpha domain. The G1 motif stretch occupies residues 35–48 (KLLLLGAGESGKST). Residues 40 to 47 (GAGESGKS), 174 to 180 (LRTRIKT), 199 to 203 (DVGGQ), 268 to 271 (NKKD), and A324 each bind GTP. The Mg(2+) site is built by S47 and T180. The G2 motif stretch occupies residues 172–180 (DLLRTRIKT). The segment at 195-204 (FRVIDVGGQR) is G3 motif. Positions 264-271 (ILFLNKKD) are G4 motif. The tract at residues 322–327 (TCATDT) is G5 motif.

This sequence belongs to the G-alpha family. G(i/o/t/z) subfamily. In terms of assembly, g proteins are composed of 3 units; alpha, beta and gamma. The alpha chain contains the guanine nucleotide binding site.

Its function is as follows. Guanine nucleotide-binding proteins (G proteins) are involved as modulators or transducers in various transmembrane signaling systems. This is Guanine nucleotide-binding protein alpha-7 subunit (gpa-7) from Caenorhabditis briggsae.